Reading from the N-terminus, the 284-residue chain is L-ribulose-5-phosphate 3-epimerase UlaE (284 aa).

The protein belongs to the L-ribulose-5-phosphate 3-epimerase family.

It catalyses the reaction L-ribulose 5-phosphate = L-xylulose 5-phosphate. It functions in the pathway cofactor degradation; L-ascorbate degradation; D-xylulose 5-phosphate from L-ascorbate: step 3/4. Functionally, catalyzes the isomerization of L-xylulose-5-phosphate to L-ribulose-5-phosphate. Is involved in the anaerobic L-ascorbate utilization. The sequence is that of L-ribulose-5-phosphate 3-epimerase UlaE from Salmonella paratyphi A (strain AKU_12601).